Here is a 445-residue protein sequence, read N- to C-terminus: MCVEMKNKTNTTIPSQPQIPIQPSILPTQQTISPIPQIIPPTQPTLPKLQLDPILGSNGIPIANQEWSGTEYVRTNDPTKFIVITKTLDPKIARFLPTFKKPVITDIINKTSNSTLDMNKIITTNNFNVENAKALANFGNSCYFGTSMQLLFVMFHVRNFIVKNSNFTETGISIDLKNAYDSIKNLFITMNTAPKNDPIKSFPDYPNVKKQIMKEPDPVQMLEEDAEEFITQFMSDLDPKARNLALIKGNEYIYDVSNAQLNRQQSFSNIFNLIPLDIIKSNPTDTLENILSKTYTMVELREGVNTIQNPITSDYEFTYFVNQPTILPEYFLVRLNMVDPTSTNKLRHNIQINTTLVLTINGQTTTYFALAIIVHRGNSIRTGHYTCLVFDNQTGSQFQYIFYDDSLSSLVSIPTNSKIIPSNLYLKNITDSAYIILYGDITKLR.

Residues 133–441 (KALANFGNSC…SAYIILYGDI (309 aa)) form the USP domain. C142 (nucleophile) is an active-site residue. Residue H384 is the Proton acceptor of the active site.

This sequence belongs to the peptidase C19 family.

The protein resides in the virion. It carries out the reaction Thiol-dependent hydrolysis of ester, thioester, amide, peptide and isopeptide bonds formed by the C-terminal Gly of ubiquitin (a 76-residue protein attached to proteins as an intracellular targeting signal).. The sequence is that of Putative ubiquitin carboxyl-terminal hydrolase L293 from Acanthamoeba polyphaga mimivirus (APMV).